The primary structure comprises 310 residues: Methionyl-tRNA formyltransferase (310 aa).

109 to 112 provides a ligand contact to (6S)-5,6,7,8-tetrahydrofolate; sequence SLLP.

This sequence belongs to the Fmt family.

The enzyme catalyses L-methionyl-tRNA(fMet) + (6R)-10-formyltetrahydrofolate = N-formyl-L-methionyl-tRNA(fMet) + (6S)-5,6,7,8-tetrahydrofolate + H(+). Attaches a formyl group to the free amino group of methionyl-tRNA(fMet). The formyl group appears to play a dual role in the initiator identity of N-formylmethionyl-tRNA by promoting its recognition by IF2 and preventing the misappropriation of this tRNA by the elongation apparatus. This is Methionyl-tRNA formyltransferase from Staphylococcus epidermidis (strain ATCC 12228 / FDA PCI 1200).